The chain runs to 407 residues: Eukaryotic initiation factor 4A-II (407 aa).

The tract at residues methionine 1–glycine 22 is disordered. Residues aspartate 33–glutamine 61 carry the Q motif motif. A Helicase ATP-binding domain is found at isoleucine 64–isoleucine 235. Alanine 77–threonine 84 provides a ligand contact to ATP. Residue threonine 159 is modified to Phosphothreonine. The DEAD box signature appears at aspartate 183–aspartate 186. The Helicase C-terminal domain maps to glycine 246 to isoleucine 407.

Belongs to the DEAD box helicase family. eIF4A subfamily. EIF4F is a multi-subunit complex, the composition of which varies with external and internal environmental conditions. It is composed of at least EIF4A, EIF4E and EIF4G1/EIFFG3. Interacts with EIF4E. May interact with NOM1.

It carries out the reaction ATP + H2O = ADP + phosphate + H(+). Its function is as follows. ATP-dependent RNA helicase which is a subunit of the eIF4F complex involved in cap recognition and is required for mRNA binding to ribosome. In the current model of translation initiation, eIF4A unwinds RNA secondary structures in the 5'-UTR of mRNAs which is necessary to allow efficient binding of the small ribosomal subunit, and subsequent scanning for the initiator codon. This chain is Eukaryotic initiation factor 4A-II (EIF4A2), found in Bos taurus (Bovine).